A 433-amino-acid chain; its full sequence is Protein CLP1 homolog (433 aa).

Residues E22, R61, and 128–133 contribute to the ATP site; that span reads DVGKTT.

The protein belongs to the Clp1 family. Clp1 subfamily.

It is found in the nucleus. In terms of biological role, required for endonucleolytic cleavage during polyadenylation-dependent pre-mRNA 3'-end formation. The chain is Protein CLP1 homolog from Brugia malayi (Filarial nematode worm).